The chain runs to 617 residues: Proline--tRNA ligase (617 aa).

Belongs to the class-II aminoacyl-tRNA synthetase family. ProS type 1 subfamily. As to quaternary structure, homodimer.

The protein resides in the cytoplasm. The enzyme catalyses tRNA(Pro) + L-proline + ATP = L-prolyl-tRNA(Pro) + AMP + diphosphate. Its function is as follows. Catalyzes the attachment of proline to tRNA(Pro) in a two-step reaction: proline is first activated by ATP to form Pro-AMP and then transferred to the acceptor end of tRNA(Pro). As ProRS can inadvertently accommodate and process non-cognate amino acids such as alanine and cysteine, to avoid such errors it has two additional distinct editing activities against alanine. One activity is designated as 'pretransfer' editing and involves the tRNA(Pro)-independent hydrolysis of activated Ala-AMP. The other activity is designated 'posttransfer' editing and involves deacylation of mischarged Ala-tRNA(Pro). The misacylated Cys-tRNA(Pro) is not edited by ProRS. The sequence is that of Proline--tRNA ligase from Streptococcus pneumoniae serotype 19F (strain G54).